Reading from the N-terminus, the 150-residue chain is Large ribosomal subunit protein bL9 (150 aa).

The protein belongs to the bacterial ribosomal protein bL9 family.

Functionally, binds to the 23S rRNA. The sequence is that of Large ribosomal subunit protein bL9 from Corynebacterium aurimucosum (strain ATCC 700975 / DSM 44827 / CIP 107346 / CN-1) (Corynebacterium nigricans).